The sequence spans 256 residues: Floral homeotic protein APETALA 1-2 (256 aa).

In terms of domain architecture, MADS-box spans 1–61; it reads MGRGRVQLKR…GKLFEYSTDS (61 aa). The 91-residue stretch at 88–178 folds into the K-box domain; sequence NTNWSMEYNR…SKQIKERENV (91 aa). Residues 187 to 206 form a disordered region; the sequence is DEQNHGHNMPPPPPPQQHQI.

As to quaternary structure, homodimer capable of binding to CArG-box sequences.

It localises to the nucleus. Functionally, transcription factor that promotes early floral meristem identity in synergy with LEAFY. Displays a redundant function with CAULIFLOWER in the up-regulation of LEAFY. Required subsequently for the transition of an inflorescence meristem into a floral meristem, and for the normal development of sepals and petals in flowers. Regulates positively B class homeotic proteins. This chain is Floral homeotic protein APETALA 1-2 (2AP1), found in Brassica oleracea var. italica (Broccoli).